Consider the following 478-residue polypeptide: Vitronectin (478 aa).

The first 19 residues, Met1–Ala19, serve as a signal peptide directing secretion. An SMB domain is found at Asp20–Thr63. 7 cysteine pairs are disulfide-bonded: Cys24–Cys28, Cys24–Cys40, Cys28–Cys58, Cys38–Cys40, Cys38–Cys51, Cys44–Cys50, and Cys51–Cys58. The short motif at Arg64 to Asp66 is the Cell attachment site element. Residue Thr69 is modified to Phosphothreonine. Residues Tyr75, Tyr78, and Tyr80 each carry the sulfotyrosine modification. The segment at Glu82–Glu153 is disordered. Residue Asn86 is glycosylated (N-linked (GlcNAc...) asparagine). Polar residues predominate over residues Asn86–Pro99. Positions Glu131–Thr141 are enriched in basic and acidic residues. 3 Hemopexin repeats span residues Gly157–Ile201, Glu202–Ile249, and Pro250–Phe304. N-linked (GlcNAc...) asparagine glycans are attached at residues Asn168 and Asn241. Sulfotyrosine is present on residues Tyr278 and Tyr281. Cys292 and Cys431 are oxidised to a cystine. Phosphoserine occurs at positions 311 and 362. The segment at Leu359 to Arg395 is disordered. The span at Gln364–Ser389 shows a compositional bias: basic residues. Positions Lys366–Arg399 are heparin-binding. Ser398 bears the Phosphoserine; by PKA mark. Sulfotyrosine occurs at positions 416, 419, and 421. The stretch at Asp420–Cys473 is one Hemopexin 4 repeat.

In terms of assembly, interacts with SERPINE1/PAI1, insulin and C1QBP. Sulfated on tyrosine residues. Post-translationally, N- and O-glycosylated. In terms of processing, it has been suggested that the active SMB domain may be permitted considerable disulfide bond heterogeneity or variability, thus two alternate disulfide patterns based on 3D structures are described with 1 disulfide bond conserved in both. Plasma.

It is found in the secreted. It localises to the extracellular space. In terms of biological role, vitronectin is a cell adhesion and spreading factor found in serum and tissues. Vitronectin interact with glycosaminoglycans and proteoglycans. Is recognized by certain members of the integrin family and serves as a cell-to-substrate adhesion molecule. Inhibitor of the membrane-damaging effect of the terminal cytolytic complement pathway. This is Vitronectin (Vtn) from Mus musculus (Mouse).